Here is a 613-residue protein sequence, read N- to C-terminus: Apoptosis-inducing factor 1, mitochondrial (613 aa).

Short sequence motifs (mitochondrial localization signal) lie at residues 1–31 (MFRC…PRQR) and 63–89 (KIDN…KTMK). The N-terminal 54 residues, 1 to 54 (MFRCGGLAAGALKQKLVPLVRTVCVRSPRQRNRLPGNLFQRWHVPLELQMTRQM), are a transit peptide targeting the mitochondrion. Residues 55–101 (ASSGASGGKIDNSVLVLIVGLSTVGAGAYAYKTMKEDEKRYNERISG) constitute a propeptide, removed in mature form. Positions 100–127 (SGLGLTPEQKQKKAALSASEGEEVPQDK) are disordered. A Phosphothreonine modification is found at T105. K109 is modified (N6-succinyllysine). Phosphoserine occurs at positions 116 and 118. The tract at residues 134–483 (FLLIGGGTAA…KPYWHQSMFW (350 aa)) is FAD-dependent oxidoreductase. Residues 138–142 (GGGTA), 164–165 (ED), R172, and K177 each bind FAD. W196 contacts NAD(+). An FAD-binding site is contributed by V233. Residue K255 forms a Glycyl lysine isopeptide (Lys-Gly) (interchain with G-Cter in ubiquitin) linkage. Position 268 is a phosphoserine (S268). R285 provides a ligand contact to FAD. S292 is modified (phosphoserine). NAD(+) is bound by residues 308–311 (GGFL), E336, and K342. Position 371 is a phosphoserine (S371). K388 bears the N6-acetyllysine mark. NAD(+) is bound at residue G399. FAD is bound at residue D438. The Nuclear localization signal motif lies at 446–451 (KLGRRR). Residues 453–454 (EH), W483, and E493 contribute to the NAD(+) site. FAD-binding positions include 454 to 455 (HH) and W483. Residues 513-529 (AQDNPKSATEQSGTGIR) show a composition bias toward polar residues. Residues 513-554 (AQDNPKSATEQSGTGIRSESETESEASEITIPPSTPAVPQAP) are disordered. T521 carries the post-translational modification Phosphothreonine. S524 and S530 each carry phosphoserine. N583 lines the NAD(+) pocket. K593 bears the N6-acetyllysine mark.

It belongs to the FAD-dependent oxidoreductase family. As to quaternary structure, monomer (oxidized form). Homodimer (reduced form). Upon reduction with NADH, undergoes dimerization and forms tight, long-lived FADH2-NAD charge transfer complexes (CTC) resistant to oxidation. Also dimerizes with isoform 3 preventing its release from mitochondria. Interacts with XIAP/BIRC4. Interacts (via N-terminus) with EIF3G (via C-terminus). Interacts with PRELID1. Interacts with CHCHD4; the interaction increases in presence of NADH. Interacts with processed form of PARP1 (Poly [ADP-ribose] polymerase 1, processed C-terminus); interaction is mediated with poly-ADP-ribose chains attached to PARP1, promoting translocation into the nucleus. It depends on FAD as a cofactor. In terms of processing, under normal conditions, a 54-residue N-terminal segment is first proteolytically removed during or just after translocation into the mitochondrial intermembrane space (IMS) by the mitochondrial processing peptidase (MPP) to form the inner-membrane-anchored mature form (AIFmit). During apoptosis, it is further proteolytically processed at amino-acid position 101 leading to the generation of the mature form, which is confined to the mitochondrial IMS in a soluble form (AIFsol). AIFsol is released to the cytoplasm in response to specific death signals, and translocated to the nucleus, where it induces nuclear apoptosis in a caspase-independent manner. Ubiquitination by XIAP/BIRC4 does not lead to proteasomal degradation. Ubiquitination at Lys-255 by XIAP/BIRC4 blocks its ability to bind DNA and induce chromatin degradation, thereby inhibiting its ability to induce cell death. In terms of tissue distribution, expressed in all tested tissues. Detected in muscle and skin fibroblasts (at protein level). Expressed in osteoblasts (at protein level). As to expression, brain specific. Expressed in all tested tissues except brain. In terms of tissue distribution, isoform 5 is frequently down-regulated in human cancers.

The protein resides in the mitochondrion intermembrane space. Its subcellular location is the mitochondrion inner membrane. It is found in the cytoplasm. It localises to the nucleus. The protein localises to the perinuclear region. The protein resides in the mitochondrion. Its subcellular location is the cytosol. The enzyme catalyses A + NADH + H(+) = AH2 + NAD(+). Functions both as NADH oxidoreductase and as regulator of apoptosis. In response to apoptotic stimuli, it is released from the mitochondrion intermembrane space into the cytosol and to the nucleus, where it functions as a proapoptotic factor in a caspase-independent pathway. Release into the cytoplasm is mediated upon binding to poly-ADP-ribose chains. The soluble form (AIFsol) found in the nucleus induces 'parthanatos' i.e. caspase-independent fragmentation of chromosomal DNA. Binds to DNA in a sequence-independent manner. Interacts with EIF3G, and thereby inhibits the EIF3 machinery and protein synthesis, and activates caspase-7 to amplify apoptosis. Plays a critical role in caspase-independent, pyknotic cell death in hydrogen peroxide-exposed cells. In contrast, participates in normal mitochondrial metabolism. Plays an important role in the regulation of respiratory chain biogenesis by interacting with CHCHD4 and controlling CHCHD4 mitochondrial import. Its function is as follows. Has NADH oxidoreductase activity. Does not induce nuclear apoptosis. Functionally, pro-apoptotic isoform. The chain is Apoptosis-inducing factor 1, mitochondrial from Homo sapiens (Human).